A 477-amino-acid chain; its full sequence is GH30 family xylanase (477 aa).

Residues Met-1–Ala-19 form the signal peptide. 3 N-linked (GlcNAc...) asparagine glycosylation sites follow: Asn-194, Asn-237, and Asn-331.

Belongs to the glycosyl hydrolase 30 family.

It localises to the secreted. Activity is enhanced by 10 mM Co(2+), Cu 2(2+) and Mn(2+) to levels as high as 44%. Partial inhibition of activity from 5 to 15% is observed in the presence of the following compouinds at a centration of 10 mM (from higher inhibition to lower): EDTA &gt; Mg(2+) &gt; urea, Zn(2+) &gt; Fe(3+). Functionally, xylanase exhibiting endo- and exo-xylanase activity. Shows the highest activity toward beechwood glucuronoxylan, which consists of a beta-1,4-linked xylose backbone decorated with the methylated form of D-glucuronic acid (MeGlcA) attached directly to the main chain at xylose C2. Also acts against wheat arabinoxylan, a xylan without MeGlcA substituents along the main chain, but the xylanase activity is about two orders of magnitude lower than that achieved in the case of beechwood xylan. Shows no activity against carob galactomannan, konjac glucomannan, or barley beta-glucan. The recombinant xylanase also exhibits an exo-activity by releasing processively disaccharide units from the non-reducing end of linear and decorated xylooligosaccharides (XOS). This Thermothelomyces thermophilus (strain ATCC 42464 / BCRC 31852 / DSM 1799) (Sporotrichum thermophile) protein is GH30 family xylanase.